The sequence spans 570 residues: Periplasmic trehalase (570 aa).

The N-terminal stretch at 1 to 34 is a signal peptide; sequence MIPPEIRRSVLLQKAIKLALAGTLLTFASFSATA. Substrate-binding positions include Arg159, 166 to 167, Asn203, 212 to 214, 284 to 286, and Gly317; these read WD, RSQ, and RPE. Active-site proton donor/acceptor residues include Asp319 and Glu503. Position 518 (Glu518) interacts with substrate. Positions 544–570 are disordered; the sequence is KPCDSVPSTRPASLSATPTKTPSAATQ. The segment covering 554–570 has biased composition (low complexity); sequence PASLSATPTKTPSAATQ.

The protein belongs to the glycosyl hydrolase 37 family. Monomer.

The protein resides in the periplasm. The catalysed reaction is alpha,alpha-trehalose + H2O = alpha-D-glucose + beta-D-glucose. Its function is as follows. Provides the cells with the ability to utilize trehalose at high osmolarity by splitting it into glucose molecules that can subsequently be taken up by the phosphotransferase-mediated uptake system. In Salmonella choleraesuis (strain SC-B67), this protein is Periplasmic trehalase.